Reading from the N-terminus, the 302-residue chain is Acetylglutamate kinase (302 aa).

Substrate is bound by residues 55 to 56 (GG), arginine 77, and asparagine 176.

Belongs to the acetylglutamate kinase family. ArgB subfamily.

The protein localises to the cytoplasm. The catalysed reaction is N-acetyl-L-glutamate + ATP = N-acetyl-L-glutamyl 5-phosphate + ADP. It participates in amino-acid biosynthesis; L-arginine biosynthesis; N(2)-acetyl-L-ornithine from L-glutamate: step 2/4. Its function is as follows. Catalyzes the ATP-dependent phosphorylation of N-acetyl-L-glutamate. This Corynebacterium efficiens (strain DSM 44549 / YS-314 / AJ 12310 / JCM 11189 / NBRC 100395) protein is Acetylglutamate kinase.